The chain runs to 314 residues: Serine/threonine-protein phosphatase CPPED1 (314 aa).

Serine 2 bears the Phosphoserine mark. Residues 47–250 (KAWSTGDCDN…KVVFSGHYHR (204 aa)) form a catalytic region. A divalent metal cation is bound by residues aspartate 53, aspartate 90, asparagine 127, and histidine 247. Serine 294 carries the phosphoserine modification.

The protein belongs to the metallophosphoesterase superfamily. CPPED1 family. Requires a divalent metal cation as cofactor. Expressed in subcutaneous adipose tissue.

It is found in the cytoplasm. The catalysed reaction is O-phospho-L-seryl-[protein] + H2O = L-seryl-[protein] + phosphate. It catalyses the reaction O-phospho-L-threonyl-[protein] + H2O = L-threonyl-[protein] + phosphate. In terms of biological role, protein phosphatase that dephosphorylates AKT family kinase specifically at 'Ser-473', blocking cell cycle progression and promoting cell apoptosis. May play an inhibitory role in glucose uptake by adipocytes. The polypeptide is Serine/threonine-protein phosphatase CPPED1 (CPPED1) (Homo sapiens (Human)).